The chain runs to 156 residues: 6,7-dimethyl-8-ribityllumazine synthase (156 aa).

5-amino-6-(D-ribitylamino)uracil-binding positions include Trp-22, 56 to 58 (AYE), and 80 to 82 (AVI). 85–86 (DT) lines the (2S)-2-hydroxy-3-oxobutyl phosphate pocket. Catalysis depends on His-88, which acts as the Proton donor. Phe-113 lines the 5-amino-6-(D-ribitylamino)uracil pocket. (2S)-2-hydroxy-3-oxobutyl phosphate is bound at residue Arg-127.

The protein belongs to the DMRL synthase family.

It carries out the reaction (2S)-2-hydroxy-3-oxobutyl phosphate + 5-amino-6-(D-ribitylamino)uracil = 6,7-dimethyl-8-(1-D-ribityl)lumazine + phosphate + 2 H2O + H(+). It participates in cofactor biosynthesis; riboflavin biosynthesis; riboflavin from 2-hydroxy-3-oxobutyl phosphate and 5-amino-6-(D-ribitylamino)uracil: step 1/2. Catalyzes the formation of 6,7-dimethyl-8-ribityllumazine by condensation of 5-amino-6-(D-ribitylamino)uracil with 3,4-dihydroxy-2-butanone 4-phosphate. This is the penultimate step in the biosynthesis of riboflavin. This chain is 6,7-dimethyl-8-ribityllumazine synthase, found in Deinococcus deserti (strain DSM 17065 / CIP 109153 / LMG 22923 / VCD115).